The primary structure comprises 133 residues: Small ribosomal subunit protein uS9 (133 aa).

It belongs to the universal ribosomal protein uS9 family.

The protein is Small ribosomal subunit protein uS9 of Ureaplasma urealyticum serovar 10 (strain ATCC 33699 / Western).